A 279-amino-acid chain; its full sequence is Presqualene diphosphate synthase (279 aa).

The protein belongs to the phytoene/squalene synthase family. HpnD subfamily.

It carries out the reaction 2 (2E,6E)-farnesyl diphosphate = presqualene diphosphate + diphosphate. It functions in the pathway secondary metabolite biosynthesis; hopanoid biosynthesis. Involved in the biosynthesis of the hopanoid precursor squalene (SQ) from farnesyl diphosphate (FPP). Catalyzes the first step, the formation of presqualene diphosphate (PSPP) from two molecules of FPP. The sequence is that of Presqualene diphosphate synthase from Sinorhizobium fredii (strain NBRC 101917 / NGR234).